We begin with the raw amino-acid sequence, 246 residues long: Hydroxyacylglutathione hydrolase (246 aa).

The Zn(2+) site is built by His58, His60, Asp62, His63, His117, Asp137, and His175.

The protein belongs to the metallo-beta-lactamase superfamily. Glyoxalase II family. As to quaternary structure, monomer. It depends on Zn(2+) as a cofactor.

It catalyses the reaction an S-(2-hydroxyacyl)glutathione + H2O = a 2-hydroxy carboxylate + glutathione + H(+). Its pathway is secondary metabolite metabolism; methylglyoxal degradation; (R)-lactate from methylglyoxal: step 2/2. In terms of biological role, thiolesterase that catalyzes the hydrolysis of S-D-lactoyl-glutathione to form glutathione and D-lactic acid. The sequence is that of Hydroxyacylglutathione hydrolase from Prochlorococcus marinus (strain MIT 9301).